Reading from the N-terminus, the 200-residue chain is 3-isopropylmalate dehydratase small subunit (200 aa).

The protein belongs to the LeuD family. LeuD type 1 subfamily. Heterodimer of LeuC and LeuD.

It catalyses the reaction (2R,3S)-3-isopropylmalate = (2S)-2-isopropylmalate. Its pathway is amino-acid biosynthesis; L-leucine biosynthesis; L-leucine from 3-methyl-2-oxobutanoate: step 2/4. Catalyzes the isomerization between 2-isopropylmalate and 3-isopropylmalate, via the formation of 2-isopropylmaleate. This chain is 3-isopropylmalate dehydratase small subunit, found in Haemophilus influenzae (strain 86-028NP).